We begin with the raw amino-acid sequence, 506 residues long: Maturase K (506 aa).

Belongs to the intron maturase 2 family. MatK subfamily.

The protein resides in the plastid. It is found in the chloroplast. Usually encoded in the trnK tRNA gene intron. Probably assists in splicing its own and other chloroplast group II introns. This Rhododendron ferrugineum (Alpenrose) protein is Maturase K.